Reading from the N-terminus, the 384-residue chain is MALQATTTTFCFSGPTFRSTPHSLTSKRPISIKATTSSPSRLSNSRSNLKGRALSSDGSTQESPYVVCFGEMLIDFVPTTSGLSLADAPAFKKAPGGAPANVAVGIARLGGSSAFIGKVGEDEFGYMLANILKDNNVNNDGMRFDPGARTALAFVTLTNEGEREFMFYRNPSADMLLEESELDFDLIKKAKIFHYGSISLITEPCKSAHISAAKAAKEAGVILSYDPNLRLPLWPSADNAREEILSIWETADIIKISEEEIVFLTKGEDPYDDNVVRKLFHPKLKLLLVTEGPEGCRYYTKDFSGRVHGLKVDVVDTTGAGDAFVAGILSQLANDLSLLQDEERLREALMFANACGALTVKVRGAIPALPTKEAVHEALLKAVV.

A chloroplast-targeting transit peptide spans 1–46; that stretch reads MALQATTTTFCFSGPTFRSTPHSLTSKRPISIKATTSSPSRLSNSR. Positions 34 to 61 are disordered; that stretch reads ATTSSPSRLSNSRSNLKGRALSSDGSTQ. The span at 35–48 shows a compositional bias: low complexity; it reads TTSSPSRLSNSRSN.

It belongs to the carbohydrate kinase PfkB family.

The protein localises to the plastid. The protein resides in the chloroplast. The catalysed reaction is D-fructose + ATP = D-fructose 6-phosphate + ADP + H(+). Its pathway is glycan biosynthesis; starch biosynthesis. In terms of biological role, may play an important role in maintaining the flux of carbon towards starch formation. In Arabidopsis thaliana (Mouse-ear cress), this protein is Probable fructokinase-6, chloroplastic.